The sequence spans 171 residues: Co-chaperone protein HscB homolog (171 aa).

Positions 2 to 69 constitute a J domain; that stretch reads NHFELFDLPV…DSRAAYLLSL (68 aa).

This sequence belongs to the HscB family. As to quaternary structure, interacts with HscA and stimulates its ATPase activity.

In terms of biological role, co-chaperone involved in the maturation of iron-sulfur cluster-containing proteins. Seems to help targeting proteins to be folded toward HscA. This is Co-chaperone protein HscB homolog from Acinetobacter baylyi (strain ATCC 33305 / BD413 / ADP1).